Here is a 379-residue protein sequence, read N- to C-terminus: Probable RNA 3'-terminal phosphate cyclase-like protein (379 aa).

It belongs to the RNA 3'-terminal cyclase family. Type 2 subfamily. As to quaternary structure, part of the small subunit (SSU) processome, composed of more than 70 proteins and the RNA chaperone small nucleolar RNA (snoRNA) U3.

Its subcellular location is the nucleus. It localises to the nucleolus. In terms of biological role, part of the small subunit (SSU) processome, first precursor of the small eukaryotic ribosomal subunit. During the assembly of the SSU processome in the nucleolus, many ribosome biogenesis factors, an RNA chaperone and ribosomal proteins associate with the nascent pre-rRNA and work in concert to generate RNA folding, modifications, rearrangements and cleavage as well as targeted degradation of pre-ribosomal RNA by the RNA exosome. Does not have cyclase activity. In Caenorhabditis elegans, this protein is Probable RNA 3'-terminal phosphate cyclase-like protein.